We begin with the raw amino-acid sequence, 82 residues long: U-actitoxin-Oulsp2 (82 aa).

The first 21 residues, Met-1 to Ala-21, serve as a signal peptide directing secretion. Residues Ser-22 to Arg-46 constitute a propeptide that is removed on maturation. The region spanning Cys-48–Cys-82 is the ShKT domain. Intrachain disulfides connect Cys-48–Cys-82, Cys-57–Cys-75, and Cys-66–Cys-79. Residues Lys-70–Tyr-71 form a theoritically crucial for binding to potassium channels region.

This sequence belongs to the sea anemone type 1 potassium channel toxin family. Type 1b subfamily.

Its subcellular location is the secreted. It localises to the nematocyst. Functionally, probable toxin with unknown function. In contrast to similar toxins, this toxin does not inhibit voltage-gated potassium channels (tested at 100 nM). Does not show antimicrobial activities against bacteria and yeasts. This chain is U-actitoxin-Oulsp2, found in Oulactis sp. (Sea anemone).